The chain runs to 194 residues: MSEEVSAPARLLFNRWDTSEVTIRDPGIARYVNLNSMMVPHSCGRLTRQEFHKANMLIVERLINQLMRTEVNTGKKQLAIRIVRDAFEIVHQKTKKNPIEVLCDAVANAGPREETVRLKYGGINVPKSVDTAPMRRVNTAVGLIAAGVYSASHKKKKPVANALAEELIAAANGDVKCYSVAKREERERVAKSAR.

It belongs to the universal ribosomal protein uS7 family. As to quaternary structure, part of the 30S ribosomal subunit.

Its function is as follows. One of the primary rRNA binding proteins, it binds directly to 16S rRNA where it nucleates assembly of the head domain of the 30S subunit. Is located at the subunit interface close to the decoding center. This chain is Small ribosomal subunit protein uS7, found in Methanospirillum hungatei JF-1 (strain ATCC 27890 / DSM 864 / NBRC 100397 / JF-1).